We begin with the raw amino-acid sequence, 385 residues long: Probable caffeine synthase 3 (385 aa).

S-adenosyl-L-homocysteine contacts are provided by tyrosine 18, cysteine 62, asparagine 67, aspartate 101, leucine 102, serine 140, and phenylalanine 141. Tyrosine 158, glutamine 161, and phenylalanine 162 together coordinate caffeine. Asparagine 179 provides a ligand contact to Mg(2+). Residue threonine 238 participates in caffeine binding. Residues aspartate 261, phenylalanine 263, and asparagine 264 each contribute to the Mg(2+) site. Residue tyrosine 369 coordinates caffeine.

Belongs to the methyltransferase superfamily. Type-7 methyltransferase family. Requires Mg(2+) as cofactor. In terms of tissue distribution, expressed in roots, stems, young and old leaves.

It functions in the pathway alkaloid biosynthesis. Its function is as follows. May be involved in the biosynthesis of caffeine. This is Probable caffeine synthase 3 from Coffea arabica (Arabian coffee).